Here is a 1601-residue protein sequence, read N- to C-terminus: Ectopic P granules protein 5 (1601 aa).

The interval Met1–Leu109 is disordered. Residues Arg15–Asp26 show a composition bias toward basic and acidic residues.

Belongs to the EPG5 family.

Its subcellular location is the cytoplasm. Its function is as follows. Involved in autophagy. Has a role in the degradation of protein aggregates within autophagosomes. Essential for starvation-induced autotrophy and omegasome development. This Caenorhabditis briggsae protein is Ectopic P granules protein 5 (epg-5).